We begin with the raw amino-acid sequence, 625 residues long: Threonine--tRNA ligase (625 aa).

The tract at residues 1 to 147 is editing domain; sequence MRMLLIHSDY…TIVPEEAKVE (147 aa). Residues 206–505 form a catalytic region; that stretch reads PHVRLMLEHE…MQEGKKPMFP (300 aa). Residues cysteine 298, histidine 350, and histidine 474 each coordinate Zn(2+).

This sequence belongs to the class-II aminoacyl-tRNA synthetase family. Homodimer. Zn(2+) serves as cofactor.

The protein localises to the cytoplasm. It carries out the reaction tRNA(Thr) + L-threonine + ATP = L-threonyl-tRNA(Thr) + AMP + diphosphate + H(+). Its function is as follows. Catalyzes the attachment of threonine to tRNA(Thr) in a two-step reaction: L-threonine is first activated by ATP to form Thr-AMP and then transferred to the acceptor end of tRNA(Thr). Also edits incorrectly charged L-seryl-tRNA(Thr). This chain is Threonine--tRNA ligase, found in Pyrococcus furiosus (strain ATCC 43587 / DSM 3638 / JCM 8422 / Vc1).